The primary structure comprises 434 residues: Histidinol dehydrogenase (434 aa).

Positions 260 and 263 each coordinate Zn(2+). Catalysis depends on proton acceptor residues E330 and H331. A Zn(2+)-binding site is contributed by H423.

This sequence belongs to the histidinol dehydrogenase family. It depends on Zn(2+) as a cofactor.

The enzyme catalyses L-histidinol + 2 NAD(+) + H2O = L-histidine + 2 NADH + 3 H(+). Its pathway is amino-acid biosynthesis; L-histidine biosynthesis; L-histidine from 5-phospho-alpha-D-ribose 1-diphosphate: step 9/9. Functionally, catalyzes the sequential NAD-dependent oxidations of L-histidinol to L-histidinaldehyde and then to L-histidine. This chain is Histidinol dehydrogenase (hisD), found in Synechocystis sp. (strain ATCC 27184 / PCC 6803 / Kazusa).